The following is a 1199-amino-acid chain: Tubulin-specific chaperone D (1199 aa).

2 disordered regions span residues 1 to 23 (MALS…VEDA) and 337 to 361 (QHSI…QDDV). The segment covering 14-23 (DPVEDPVEDA) has biased composition (acidic residues). 4 HEAT repeats span residues 368–406 (VIEQ…ADDV), 603–639 (EHTA…ARSL), 757–793 (AAAQ…PAFF), and 1111–1147 (GDVR…VLTY).

This sequence belongs to the TBCD family. Found in a complex with at least ARL2, PPP2CB, PPP2R1A, PPP2R2A, PPP2R5E and TBCD. Interacts with PPP2CB. Part of a supercomplex made of cofactors A to E. Cofactors A and D function by capturing and stabilizing tubulin in a quasi-native conformation. Cofactor E binds to the cofactor D-tubulin complex; interaction with cofactor C then causes the release of tubulin polypeptides that are committed to the native state. Interacts with ARL2; interaction is enhanced with the GDP-bound form of ARL2. Does not interact with ARL3, ARL4A and ARL4D. Interacts with beta tubulin. Interacts with TBCE.

It is found in the cell junction. It localises to the tight junction. Its subcellular location is the lateral cell membrane. The protein resides in the cytoplasm. The protein localises to the adherens junction. It is found in the cytoskeleton. It localises to the microtubule organizing center. Its subcellular location is the centrosome. Functionally, tubulin-folding protein implicated in the first step of the tubulin folding pathway and required for tubulin complex assembly. Involved in the regulation of microtubule polymerization or depolymerization, it modulates microtubule dynamics by capturing GTP-bound beta-tubulin (TUBB). Its ability to interact with beta tubulin is regulated via its interaction with ARL2. Acts as a GTPase-activating protein (GAP) for ARL2. Induces microtubule disruption in absence of ARL2. Increases degradation of beta tubulin, when overexpressed in polarized cells. Promotes epithelial cell detachment, a process antagonized by ARL2. Induces tight adherens and tight junctions disassembly at the lateral cell membrane. Required for correct assembly and maintenance of the mitotic spindle, and proper progression of mitosis. Involved in neuron morphogenesis. This chain is Tubulin-specific chaperone D (TBCD), found in Bos taurus (Bovine).